We begin with the raw amino-acid sequence, 214 residues long: Thymidylate kinase (214 aa).

10 to 17 is a binding site for ATP; sequence GPDGAGKT.

It belongs to the thymidylate kinase family.

It catalyses the reaction dTMP + ATP = dTDP + ADP. Phosphorylation of dTMP to form dTDP in both de novo and salvage pathways of dTTP synthesis. The chain is Thymidylate kinase from Lacticaseibacillus casei (strain BL23) (Lactobacillus casei).